Here is a 207-residue protein sequence, read N- to C-terminus: Casparian strip membrane protein 1 (207 aa).

Ala-2 carries the N-acetylalanine modification. The Cytoplasmic segment spans residues 2-44; that stretch reads AKESTTIDVGEPNTMTKSTSHVVVDEKKKKGFVAAAAGGGYKR. The chain crosses the membrane as a helical span at residues 45 to 65; the sequence is GLAVFDFLLRLAAIGITIGAS. Residues 66 to 95 lie on the Extracellular side of the membrane; that stretch reads SVMFTAEETLPFFTQFLQFQAGYDDFPTFQ. The helical transmembrane segment at 96–116 threads the bilayer; that stretch reads FFVIAIAIVASYLVLSLPFSI. Residues 117–128 lie on the Cytoplasmic side of the membrane; the sequence is VTIVRPLAVAPR. The helical transmembrane segment at 129-149 threads the bilayer; the sequence is LILLISDTVVLTLTTAAAAAA. Topologically, residues 150–181 are extracellular; sequence ASIVYLAHNGNTNTNWLPICQQFGDFCQTAST. A helical transmembrane segment spans residues 182 to 202; sequence AVVAASISVAFFVLLIVISAI. The Cytoplasmic portion of the chain corresponds to 203-207; that stretch reads ALKRH.

Belongs to the Casparian strip membrane proteins (CASP) family. In terms of assembly, homodimer and heterodimers.

It localises to the cell membrane. Regulates membrane-cell wall junctions and localized cell wall deposition. Required for establishment of the Casparian strip membrane domain (CSD) and the subsequent formation of Casparian strips, a cell wall modification of the root endodermis that determines an apoplastic barrier between the intraorganismal apoplasm and the extraorganismal apoplasm and prevents lateral diffusion. This is Casparian strip membrane protein 1 from Raphanus raphanistrum (Wild radish).